The chain runs to 858 residues: Leucine--tRNA ligase (858 aa).

A 'HIGH' region motif is present at residues 42–52; the sequence is PYPSGRLHMGH. A 'KMSKS' region motif is present at residues 618 to 622; the sequence is KMSKS. Position 621 (Lys621) interacts with ATP.

This sequence belongs to the class-I aminoacyl-tRNA synthetase family.

It localises to the cytoplasm. The enzyme catalyses tRNA(Leu) + L-leucine + ATP = L-leucyl-tRNA(Leu) + AMP + diphosphate. The protein is Leucine--tRNA ligase of Aeromonas salmonicida (strain A449).